The following is a 76-amino-acid chain: Alpha/kappa-conotoxin-like pl14.3 (76 aa).

A signal peptide spans 1–27; that stretch reads MPSVRSVACCCLLWMMLSVQLVTPGSP. The propeptide occupies 28–39; it reads ATAQLSGQRTAR. 2 disulfides stabilise this stretch: Cys-46–Cys-61 and Cys-50–Cys-63. Asp-64 carries the post-translational modification Aspartic acid 1-amide. A propeptide spanning residues 65 to 76 is cleaved from the precursor; sequence GKRDVVSSSMAV.

Belongs to the conotoxin J superfamily. Expressed by the venom duct.

It is found in the secreted. Its function is as follows. Highly inhibits both nicotinic acetylcholine receptors (neuronal (alpha-3/beta-4) and muscular (alpha-1/beta-1/epsilon/delta) subtypes) and the voltage-gated potassium channel Kv1.6/KCNA6 subtype. This Conus planorbis (Planorbis cone) protein is Alpha/kappa-conotoxin-like pl14.3.